A 136-amino-acid chain; its full sequence is Large-conductance mechanosensitive channel (136 aa).

Helical transmembrane passes span 9–29 and 79–99; these read AFASRGNVIDMAVGIIIGAAF and IQTIIDFTIIAFAIFMGVKAI.

It belongs to the MscL family. As to quaternary structure, homopentamer.

It is found in the cell inner membrane. Channel that opens in response to stretch forces in the membrane lipid bilayer. May participate in the regulation of osmotic pressure changes within the cell. The protein is Large-conductance mechanosensitive channel of Shewanella baltica (strain OS223).